The primary structure comprises 67 residues: MGNIKQTFIKRTARELFDRYPDKFTRDFEHNKKMVAELTNVTSKTIRNRIAGYITRLVRMKEEGKIL.

The protein belongs to the eukaryotic ribosomal protein eS17 family. Part of the 30S ribosomal subunit.

The chain is Small ribosomal subunit protein eS17 from Thermococcus kodakarensis (strain ATCC BAA-918 / JCM 12380 / KOD1) (Pyrococcus kodakaraensis (strain KOD1)).